We begin with the raw amino-acid sequence, 350 residues long: Transmembrane protein 185A (350 aa).

The next 7 membrane-spanning stretches (helical) occupy residues 16 to 36, 41 to 61, 81 to 101, 111 to 131, 177 to 197, 211 to 231, and 240 to 260; these read LIYA…DGII, WAVF…ASVG, FKAM…EVLV, FWLL…AACV, ILMS…VLFL, ITMA…EILL, and AFSC…LMAT. Positions 298–350 are mediates interaction with MAP1B; sequence DLHHEDNEETEETPVPEPPKIAPMFRKKARVVITQSPGKYALPPPKLNIEMPD.

It belongs to the TMEM185 family. In terms of assembly, interacts with MAP1B.

The protein localises to the cell projection. Its subcellular location is the dendrite. It is found in the membrane. In Pongo abelii (Sumatran orangutan), this protein is Transmembrane protein 185A (TMEM185A).